The following is a 358-amino-acid chain: MKFVDEVTIRVEGGDGGDGCASFRREKYIPRGGPDGGDGGHGGSVWLRADEGLNTLADFRHERKFTAQRGENGMGKQRYGKSGQDREIAVPVGTLVSDADTGELIGELLEHGQRLLVARGGKGGLGNVHFKSSTNRAPRQYTPGTKADRRNLHLELRLLADVGLLGMPNAGKSTLVRAISSARPRVADYPFTTLYPNLGVVSVGAARSFVVADIPGLIEGAAEGAGLGIQFLKHLGRTRLVLHVIDAVPLDPAQDPVDDARKIVAELGRYSESLAARERWLVLNKLDLLPEEDRDAHVNDLLQRLQWGGPVYRISALSGDGTRQLAQDVMNRLEVMDEEAREAGERARREQRQEEGPE.

Positions 1-159 (MKFVDEVTIR…RNLHLELRLL (159 aa)) constitute an Obg domain. The OBG-type G domain maps to 160–334 (ADVGLLGMPN…LAQDVMNRLE (175 aa)). GTP is bound by residues 166-173 (GMPNAGKS), 191-195 (FTTLY), 213-216 (DIPG), 284-287 (NKLD), and 315-317 (SAL). Residues Ser-173 and Thr-193 each contribute to the Mg(2+) site. The disordered stretch occupies residues 337-358 (DEEAREAGERARREQRQEEGPE). The segment covering 341-358 (REAGERARREQRQEEGPE) has biased composition (basic and acidic residues).

The protein belongs to the TRAFAC class OBG-HflX-like GTPase superfamily. OBG GTPase family. Monomer. Mg(2+) is required as a cofactor.

It localises to the cytoplasm. In terms of biological role, an essential GTPase which binds GTP, GDP and possibly (p)ppGpp with moderate affinity, with high nucleotide exchange rates and a fairly low GTP hydrolysis rate. Plays a role in control of the cell cycle, stress response, ribosome biogenesis and in those bacteria that undergo differentiation, in morphogenesis control. The sequence is that of GTPase Obg from Alkalilimnicola ehrlichii (strain ATCC BAA-1101 / DSM 17681 / MLHE-1).